Here is a 400-residue protein sequence, read N- to C-terminus: Nicotinate phosphoribosyltransferase (400 aa).

At histidine 220 the chain carries Phosphohistidine; by autocatalysis.

This sequence belongs to the NAPRTase family. Transiently phosphorylated on a His residue during the reaction cycle. Phosphorylation strongly increases the affinity for substrates and increases the rate of nicotinate D-ribonucleotide production. Dephosphorylation regenerates the low-affinity form of the enzyme, leading to product release.

It catalyses the reaction nicotinate + 5-phospho-alpha-D-ribose 1-diphosphate + ATP + H2O = nicotinate beta-D-ribonucleotide + ADP + phosphate + diphosphate. The protein operates within cofactor biosynthesis; NAD(+) biosynthesis; nicotinate D-ribonucleotide from nicotinate: step 1/1. In terms of biological role, catalyzes the synthesis of beta-nicotinate D-ribonucleotide from nicotinate and 5-phospho-D-ribose 1-phosphate at the expense of ATP. This Salmonella dublin (strain CT_02021853) protein is Nicotinate phosphoribosyltransferase.